A 364-amino-acid polypeptide reads, in one-letter code: Delta(7)-sterol 5(6)-desaturase (364 aa).

3 consecutive transmembrane segments (helical) span residues 94–114 (FFSLWAVVTVFGLLLYLITAS), 142–162 (LAVSAIPTMSLLTVPWFMLEL), and 181–201 (KLLIEYATFIFFTDCGIYLAH). A Fatty acid hydroxylase domain is found at 188 to 312 (TFIFFTDCGI…FTTLWDRLGG (125 aa)). The Histidine box-1 signature appears at 201–205 (HRWLH). The Histidine box-2 motif lies at 214–218 (HKPHH). Residues 249 to 269 (ILPLHKISYLILFTFVNFWSV) form a helical membrane-spanning segment. The Histidine box-3 motif lies at 289-293 (HTVHH).

Belongs to the sterol desaturase family. Requires Fe cation as cofactor.

Its subcellular location is the endoplasmic reticulum membrane. It catalyses the reaction a Delta(7)-sterol + 2 Fe(II)-[cytochrome b5] + O2 + 2 H(+) = a Delta(5),Delta(7)-sterol + 2 Fe(III)-[cytochrome b5] + 2 H2O. The protein operates within steroid metabolism; ergosterol biosynthesis; ergosterol from zymosterol: step 3/5. Functionally, catalyzes the introduction of a C-5 double bond in the B ring of ergosterol. May contribute to the regulation of ergosterol biosynthesis. The sequence is that of Delta(7)-sterol 5(6)-desaturase (ERG3) from Candida glabrata (strain ATCC 2001 / BCRC 20586 / JCM 3761 / NBRC 0622 / NRRL Y-65 / CBS 138) (Yeast).